We begin with the raw amino-acid sequence, 68 residues long: Palustrin-1c (68 aa).

An N-terminal signal peptide occupies residues 1-22; the sequence is MFTTKKSLLLLFFLGTISLSLC. Positions 23–39 are excised as a propeptide; that stretch reads EEERGADEEEGDGEKLT. C62 and C68 form a disulfide bridge.

Expressed by the skin glands.

The protein localises to the secreted. Its function is as follows. Antimicrobial activity against Gram-negative bacterium E.coli. Stimulates insulin release. The protein is Palustrin-1c of Lithobates palustris (Pickerel frog).